Here is a 380-residue protein sequence, read N- to C-terminus: Cytochrome b (380 aa).

A run of 4 helical transmembrane segments spans residues 33–53 (FGSL…FLAM), 77–98 (WLLR…YLHI), 113–133 (WNIG…GYVL), and 178–198 (FFTF…LHLL). Heme b is bound by residues histidine 83 and histidine 97. Residues histidine 182 and histidine 196 each coordinate heme b. Histidine 201 is a binding site for a ubiquinone. The next 4 helical transmembrane spans lie at 226 to 246 (YKDL…ALLN), 288 to 308 (LGGV…PVLH), 320 to 340 (PSQT…WIGG), and 347 to 367 (FIII…ILIP).

This sequence belongs to the cytochrome b family. The cytochrome bc1 complex contains 3 respiratory subunits (MT-CYB, CYC1 and UQCRFS1), 2 core proteins (UQCRC1 and UQCRC2) and probably 6 low-molecular weight proteins. Requires heme b as cofactor.

Its subcellular location is the mitochondrion inner membrane. Its function is as follows. Component of the ubiquinol-cytochrome c reductase complex (complex III or cytochrome b-c1 complex) that is part of the mitochondrial respiratory chain. The b-c1 complex mediates electron transfer from ubiquinol to cytochrome c. Contributes to the generation of a proton gradient across the mitochondrial membrane that is then used for ATP synthesis. The chain is Cytochrome b (mt-cyb) from Atractosteus spatula (Alligator gar).